The primary structure comprises 81 residues: ATP synthase subunit c, chloroplastic (81 aa).

2 helical membrane-spanning segments follow: residues 3–23 (PLVF…ASIG) and 57–77 (LAFM…LLFA).

It belongs to the ATPase C chain family. As to quaternary structure, F-type ATPases have 2 components, F(1) - the catalytic core - and F(0) - the membrane proton channel. F(1) has five subunits: alpha(3), beta(3), gamma(1), delta(1), epsilon(1). F(0) has four main subunits: a(1), b(1), b'(1) and c(10-14). The alpha and beta chains form an alternating ring which encloses part of the gamma chain. F(1) is attached to F(0) by a central stalk formed by the gamma and epsilon chains, while a peripheral stalk is formed by the delta, b and b' chains.

It is found in the plastid. The protein localises to the chloroplast thylakoid membrane. F(1)F(0) ATP synthase produces ATP from ADP in the presence of a proton or sodium gradient. F-type ATPases consist of two structural domains, F(1) containing the extramembraneous catalytic core and F(0) containing the membrane proton channel, linked together by a central stalk and a peripheral stalk. During catalysis, ATP synthesis in the catalytic domain of F(1) is coupled via a rotary mechanism of the central stalk subunits to proton translocation. In terms of biological role, key component of the F(0) channel; it plays a direct role in translocation across the membrane. A homomeric c-ring of between 10-14 subunits forms the central stalk rotor element with the F(1) delta and epsilon subunits. The protein is ATP synthase subunit c, chloroplastic of Atropa belladonna (Belladonna).